A 208-amino-acid chain; its full sequence is Thiamine-phosphate synthase (208 aa).

4-amino-2-methyl-5-(diphosphooxymethyl)pyrimidine is bound by residues 38–42 (QYRSK) and Asn-70. Mg(2+) contacts are provided by Asp-71 and Asp-90. Thr-109 provides a ligand contact to 4-amino-2-methyl-5-(diphosphooxymethyl)pyrimidine. 136–138 (SAT) provides a ligand contact to 2-[(2R,5Z)-2-carboxy-4-methylthiazol-5(2H)-ylidene]ethyl phosphate. Residue Lys-139 coordinates 4-amino-2-methyl-5-(diphosphooxymethyl)pyrimidine. 2-[(2R,5Z)-2-carboxy-4-methylthiazol-5(2H)-ylidene]ethyl phosphate-binding positions include Gly-166 and 186–187 (VS).

It belongs to the thiamine-phosphate synthase family. The cofactor is Mg(2+).

The catalysed reaction is 2-[(2R,5Z)-2-carboxy-4-methylthiazol-5(2H)-ylidene]ethyl phosphate + 4-amino-2-methyl-5-(diphosphooxymethyl)pyrimidine + 2 H(+) = thiamine phosphate + CO2 + diphosphate. It carries out the reaction 2-(2-carboxy-4-methylthiazol-5-yl)ethyl phosphate + 4-amino-2-methyl-5-(diphosphooxymethyl)pyrimidine + 2 H(+) = thiamine phosphate + CO2 + diphosphate. It catalyses the reaction 4-methyl-5-(2-phosphooxyethyl)-thiazole + 4-amino-2-methyl-5-(diphosphooxymethyl)pyrimidine + H(+) = thiamine phosphate + diphosphate. It functions in the pathway cofactor biosynthesis; thiamine diphosphate biosynthesis; thiamine phosphate from 4-amino-2-methyl-5-diphosphomethylpyrimidine and 4-methyl-5-(2-phosphoethyl)-thiazole: step 1/1. Its function is as follows. Condenses 4-methyl-5-(beta-hydroxyethyl)thiazole monophosphate (THZ-P) and 2-methyl-4-amino-5-hydroxymethyl pyrimidine pyrophosphate (HMP-PP) to form thiamine monophosphate (TMP). The polypeptide is Thiamine-phosphate synthase (Aromatoleum aromaticum (strain DSM 19018 / LMG 30748 / EbN1) (Azoarcus sp. (strain EbN1))).